Here is a 452-residue protein sequence, read N- to C-terminus: Probable phosphoglucosamine mutase (452 aa).

Residue Ser-96 is the Phosphoserine intermediate of the active site. Mg(2+)-binding residues include Ser-96, Asp-235, Asp-237, and Asp-239. At Ser-96 the chain carries Phosphoserine.

Belongs to the phosphohexose mutase family. It depends on Mg(2+) as a cofactor. Post-translationally, activated by phosphorylation.

It carries out the reaction alpha-D-glucosamine 1-phosphate = D-glucosamine 6-phosphate. Its function is as follows. Catalyzes the conversion of glucosamine-6-phosphate to glucosamine-1-phosphate. This is Probable phosphoglucosamine mutase from Methanopyrus kandleri (strain AV19 / DSM 6324 / JCM 9639 / NBRC 100938).